The primary structure comprises 288 residues: Diaminopimelate epimerase (288 aa).

Positions 13, 46, and 66 each coordinate substrate. The Proton donor role is filled by C75. Substrate contacts are provided by residues 76–77 (GN), N166, N199, and 217–218 (ER). Residue C226 is the Proton acceptor of the active site. 227 to 228 (GT) provides a ligand contact to substrate.

It belongs to the diaminopimelate epimerase family. As to quaternary structure, homodimer.

It localises to the cytoplasm. It catalyses the reaction (2S,6S)-2,6-diaminopimelate = meso-2,6-diaminopimelate. The protein operates within amino-acid biosynthesis; L-lysine biosynthesis via DAP pathway; DL-2,6-diaminopimelate from LL-2,6-diaminopimelate: step 1/1. In terms of biological role, catalyzes the stereoinversion of LL-2,6-diaminopimelate (L,L-DAP) to meso-diaminopimelate (meso-DAP), a precursor of L-lysine and an essential component of the bacterial peptidoglycan. This chain is Diaminopimelate epimerase, found in Cupriavidus pinatubonensis (strain JMP 134 / LMG 1197) (Cupriavidus necator (strain JMP 134)).